Reading from the N-terminus, the 1063-residue chain is Integrin alpha-8 (1063 aa).

An N-terminal signal peptide occupies residues 1-38; sequence MSPGASRGPRGSQAPLIAPLCCAAAALGMLLWSPACQA. Over 39–1012 the chain is Extracellular; sequence FNLDVEKLTV…TPNVSFSIPL (974 aa). 7 FG-GAP repeats span residues 44-105, 122-183, 188-240, 253-306, 307-372, 373-431, and 435-498; these read EKLT…GSAQ, NGTK…AYAE, RNSN…IANY, KQTE…STDM, TFIQ…LLFR, DPQI…GLNT, and QVLQ…LHPM. N-linked (GlcNAc...) asparagine glycosylation occurs at Asn-81. The cysteines at positions 96 and 106 are disulfide-linked. Asn-122 is a glycosylation site (N-linked (GlcNAc...) asparagine). A disulfide bond links Cys-150 and Cys-171. Asn-177 is a glycosylation site (N-linked (GlcNAc...) asparagine). A disulfide bridge connects residues Cys-187 and Cys-200. N-linked (GlcNAc...) asparagine glycosylation is present at Asn-239. Ca(2+)-binding residues include Glu-275, Thr-277, Asp-279, and Glu-283. Residues Asn-302 and Asn-311 are each glycosylated (N-linked (GlcNAc...) asparagine). Residues Asp-329, Asn-331, Asp-333, Leu-335, Asp-337, Asp-395, Asn-397, Asp-399, Tyr-401, and Asp-403 each coordinate Ca(2+). A Cell attachment site motif is present at residues 455–457; the sequence is RGD. Ca(2+) is bound by residues Asp-459, Asp-461, Asn-463, Tyr-465, and Asp-467. N-linked (GlcNAc...) asparagine glycosylation is present at Asn-504. 2 cysteine pairs are disulfide-bonded: Cys-507-Cys-518 and Cys-524-Cys-580. N-linked (GlcNAc...) asparagine glycosylation is found at Asn-601 and Asn-605. Disulfide bonds link Cys-641-Cys-647 and Cys-713-Cys-726. Residues Asn-719, Asn-737, Asn-753, Asn-780, Asn-896, and Asn-923 are each glycosylated (N-linked (GlcNAc...) asparagine). 2 disulfides stabilise this stretch: Cys-867–Cys-924 and Cys-929–Cys-934. N-linked (GlcNAc...) asparagine glycosylation is present at Asn-1005. Residues 1013-1033 traverse the membrane as a helical segment; the sequence is WVIILAILLGLLVLAILTLAL. At 1034 to 1063 the chain is on the cytoplasmic side; it reads WKCGFFDRARPPQEDMTDREQLTNDKTPEA.

It belongs to the integrin alpha chain family. In terms of assembly, heterodimer of an alpha and a beta subunit. The alpha subunit is composed of a heavy and a light chain linked by a disulfide bond. Alpha-8 associates with beta-1. As to expression, expressed in mesenchymal cells, including alveolar myofibroblasts, kidney mesangial cells and hepatic stellar cells and vascular and visceral smooth muscle (at protein level).

The protein resides in the membrane. The protein localises to the cell membrane. Functionally, integrin alpha-8/beta-1 functions in the genesis of kidney and probably of other organs by regulating the recruitment of mesenchymal cells into epithelial structures. It recognizes the sequence R-G-D in a wide array of ligands including TNC, FN1, SPP1 TGFB1, TGFB3 and VTN. NPNT is probably its functional ligand in kidney genesis. Neuronal receptor for TNC it mediates cell-cell interactions and regulates neurite outgrowth of sensory and motor neurons. The protein is Integrin alpha-8 (ITGA8) of Homo sapiens (Human).